A 359-amino-acid polypeptide reads, in one-letter code: Dihydroorotate dehydrogenase (quinone) (359 aa).

FMN is bound by residues 68 to 72 (AGFDK) and A92. Residue K72 participates in substrate binding. 117–121 (NAYGF) lines the substrate pocket. Positions 146 and 179 each coordinate FMN. Residue N179 coordinates substrate. S182 serves as the catalytic Nucleophile. N184 contacts substrate. 2 residues coordinate FMN: K215 and T243. Position 244-245 (244-245 (NT)) interacts with substrate. Residues G263, G292, and 313 to 314 (YT) each bind FMN.

This sequence belongs to the dihydroorotate dehydrogenase family. Type 2 subfamily. As to quaternary structure, monomer. FMN is required as a cofactor.

The protein localises to the cell membrane. The enzyme catalyses (S)-dihydroorotate + a quinone = orotate + a quinol. Its pathway is pyrimidine metabolism; UMP biosynthesis via de novo pathway; orotate from (S)-dihydroorotate (quinone route): step 1/1. In terms of biological role, catalyzes the conversion of dihydroorotate to orotate with quinone as electron acceptor. The chain is Dihydroorotate dehydrogenase (quinone) from Nautilia profundicola (strain ATCC BAA-1463 / DSM 18972 / AmH).